The sequence spans 229 residues: Histidine biosynthesis bifunctional protein HisIE (229 aa).

A phosphoribosyl-AMP cyclohydrolase region spans residues 1–127; that stretch reads MNTLLDGIDW…APDTSALYGV (127 aa). The interval 128 to 229 is phosphoribosyl-ATP pyrophosphohydrolase; it reads VDRLYHELLA…IAEKNSRKDS (102 aa).

It in the N-terminal section; belongs to the PRA-CH family. The protein in the C-terminal section; belongs to the PRA-PH family.

The protein resides in the cytoplasm. It catalyses the reaction 1-(5-phospho-beta-D-ribosyl)-ATP + H2O = 1-(5-phospho-beta-D-ribosyl)-5'-AMP + diphosphate + H(+). The enzyme catalyses 1-(5-phospho-beta-D-ribosyl)-5'-AMP + H2O = 1-(5-phospho-beta-D-ribosyl)-5-[(5-phospho-beta-D-ribosylamino)methylideneamino]imidazole-4-carboxamide. It participates in amino-acid biosynthesis; L-histidine biosynthesis; L-histidine from 5-phospho-alpha-D-ribose 1-diphosphate: step 2/9. The protein operates within amino-acid biosynthesis; L-histidine biosynthesis; L-histidine from 5-phospho-alpha-D-ribose 1-diphosphate: step 3/9. The chain is Histidine biosynthesis bifunctional protein HisIE from Wolinella succinogenes (strain ATCC 29543 / DSM 1740 / CCUG 13145 / JCM 31913 / LMG 7466 / NCTC 11488 / FDC 602W) (Vibrio succinogenes).